The chain runs to 87 residues: Phosphoribosyl-ATP pyrophosphatase (87 aa).

The protein belongs to the PRA-PH family.

It is found in the cytoplasm. The enzyme catalyses 1-(5-phospho-beta-D-ribosyl)-ATP + H2O = 1-(5-phospho-beta-D-ribosyl)-5'-AMP + diphosphate + H(+). It participates in amino-acid biosynthesis; L-histidine biosynthesis; L-histidine from 5-phospho-alpha-D-ribose 1-diphosphate: step 2/9. This chain is Phosphoribosyl-ATP pyrophosphatase, found in Beutenbergia cavernae (strain ATCC BAA-8 / DSM 12333 / CCUG 43141 / JCM 11478 / NBRC 16432 / NCIMB 13614 / HKI 0122).